The primary structure comprises 131 residues: Small ribosomal subunit protein uS8 (131 aa).

Belongs to the universal ribosomal protein uS8 family. Part of the 30S ribosomal subunit. Contacts proteins S5 and S12.

In terms of biological role, one of the primary rRNA binding proteins, it binds directly to 16S rRNA central domain where it helps coordinate assembly of the platform of the 30S subunit. The protein is Small ribosomal subunit protein uS8 of Bordetella petrii (strain ATCC BAA-461 / DSM 12804 / CCUG 43448).